The following is a 270-amino-acid chain: Phospholysine phosphohistidine inorganic pyrophosphate phosphatase (270 aa).

Aspartate 17 and serine 19 together coordinate Mg(2+). Substrate-binding positions include 17–19, 54–55, and lysine 189; these read DIS and TN. Aspartate 214 is a Mg(2+) binding site.

The protein belongs to the HAD-like hydrolase superfamily. Homodimer. Mg(2+) is required as a cofactor. In terms of tissue distribution, detected in liver (at protein level).

Its subcellular location is the cytoplasm. The protein resides in the nucleus. It catalyses the reaction diphosphate + H2O = 2 phosphate + H(+). Its function is as follows. Phosphatase that hydrolyzes imidodiphosphate, 3-phosphohistidine and 6-phospholysine. Has broad substrate specificity and can also hydrolyze inorganic diphosphate, but with lower efficiency. In Bos taurus (Bovine), this protein is Phospholysine phosphohistidine inorganic pyrophosphate phosphatase (LHPP).